The following is a 75-amino-acid chain: MKSDKVLDAKGLACPMPIVRTKKAMNELESGQILEVHATDKGAKNDLTAWSKSGGHDLLEQTDEGDILKFWIQKG.

Cys-14 acts as the Cysteine persulfide intermediate in catalysis.

It belongs to the sulfur carrier protein TusA family.

This is Putative sulfur carrier protein YrkI (yrkI) from Bacillus subtilis (strain 168).